A 333-amino-acid chain; its full sequence is L-lactate dehydrogenase A chain (333 aa).

Residues 30–58 and Arg-100 contribute to the NAD(+) site; that span reads GMVG…MEDK. Arg-107, Asn-139, and Arg-170 together coordinate substrate. An NAD(+)-binding site is contributed by Asn-139. His-194 acts as the Proton acceptor in catalysis. Position 249 (Thr-249) interacts with substrate.

The protein belongs to the LDH/MDH superfamily. LDH family. Homotetramer.

The protein resides in the cytoplasm. It carries out the reaction (S)-lactate + NAD(+) = pyruvate + NADH + H(+). Its pathway is fermentation; pyruvate fermentation to lactate; (S)-lactate from pyruvate: step 1/1. In Cyprinus carpio (Common carp), this protein is L-lactate dehydrogenase A chain (ldha).